The following is a 406-amino-acid chain: tRNA-specific 2-thiouridylase MnmA (406 aa).

Residues 42 to 49 and L68 each bind ATP; that span reads GLSGGVDS. C129 serves as the catalytic Nucleophile. The cysteines at positions 129 and 239 are disulfide-linked. ATP is bound at residue G154. The tract at residues 189-191 is interaction with tRNA; it reads KDQ. The active-site Cysteine persulfide intermediate is C239. Residues 344 to 345 are interaction with tRNA; sequence RY.

Belongs to the MnmA/TRMU family.

It is found in the cytoplasm. The catalysed reaction is S-sulfanyl-L-cysteinyl-[protein] + uridine(34) in tRNA + AH2 + ATP = 2-thiouridine(34) in tRNA + L-cysteinyl-[protein] + A + AMP + diphosphate + H(+). In terms of biological role, catalyzes the 2-thiolation of uridine at the wobble position (U34) of tRNA, leading to the formation of s(2)U34. The protein is tRNA-specific 2-thiouridylase MnmA of Prochlorococcus marinus (strain SARG / CCMP1375 / SS120).